We begin with the raw amino-acid sequence, 345 residues long: N-acetyl-gamma-glutamyl-phosphate reductase (345 aa).

C149 is a catalytic residue.

It belongs to the NAGSA dehydrogenase family. Type 1 subfamily.

The protein localises to the cytoplasm. It catalyses the reaction N-acetyl-L-glutamate 5-semialdehyde + phosphate + NADP(+) = N-acetyl-L-glutamyl 5-phosphate + NADPH + H(+). The protein operates within amino-acid biosynthesis; L-arginine biosynthesis; N(2)-acetyl-L-ornithine from L-glutamate: step 3/4. Catalyzes the NADPH-dependent reduction of N-acetyl-5-glutamyl phosphate to yield N-acetyl-L-glutamate 5-semialdehyde. This is N-acetyl-gamma-glutamyl-phosphate reductase from Bacillus cereus (strain AH187).